We begin with the raw amino-acid sequence, 303 residues long: Probable 5-dehydro-4-deoxyglucarate dehydratase (303 aa).

It belongs to the DapA family.

It catalyses the reaction 5-dehydro-4-deoxy-D-glucarate + H(+) = 2,5-dioxopentanoate + CO2 + H2O. The protein operates within carbohydrate acid metabolism; D-glucarate degradation; 2,5-dioxopentanoate from D-glucarate: step 2/2. The chain is Probable 5-dehydro-4-deoxyglucarate dehydratase from Pseudomonas fluorescens (strain Pf0-1).